The primary structure comprises 422 residues: Metallocarboxypeptidase A (422 aa).

The first 17 residues, 1 to 17, serve as a signal peptide directing secretion; that stretch reads MRSVLSFALLAANVVSA. Residues 18 to 112 constitute a propeptide, activation peptide; it reads AVLAPFDYSG…FEAYSAGYAP (95 aa). The 301-residue stretch at 119 to 419 folds into the Peptidase M14 domain; the sequence is SYHSYQDHLS…AGTVAMLKAV (301 aa). Zn(2+) is bound by residues histidine 179 and glutamate 182. Substrate contacts are provided by residues 179–182, arginine 237, and 254–255; these read HARE and NR. Cysteine 248 and cysteine 271 are joined by a disulfide. Position 309 (histidine 309) interacts with Zn(2+). 310–311 is a binding site for substrate; that stretch reads SY. Residue glutamate 385 is the Proton donor/acceptor of the active site.

It belongs to the peptidase M14 family. It depends on Zn(2+) as a cofactor.

The protein localises to the secreted. Extracellular metalloprotease that contributes to pathogenicity. In Arthroderma otae (strain ATCC MYA-4605 / CBS 113480) (Microsporum canis), this protein is Metallocarboxypeptidase A (MCPA).